The sequence spans 451 residues: Glycine--tRNA ligase (451 aa).

Residues arginine 99 and glutamate 168 each contribute to the substrate site. Residues 200–202, 210–215, 284–285, and 328–331 contribute to the ATP site; these read RNE, FRTREF, EL, and GLDR. Substrate is bound at residue 215 to 219; sequence FEQME. 324 to 328 contacts substrate; it reads EPSVG.

This sequence belongs to the class-II aminoacyl-tRNA synthetase family. Homodimer.

It localises to the cytoplasm. The enzyme catalyses tRNA(Gly) + glycine + ATP = glycyl-tRNA(Gly) + AMP + diphosphate. In terms of biological role, catalyzes the attachment of glycine to tRNA(Gly). The polypeptide is Glycine--tRNA ligase (Mycoplasmopsis synoviae (strain 53) (Mycoplasma synoviae)).